A 291-amino-acid polypeptide reads, in one-letter code: 4-hydroxy-tetrahydrodipicolinate synthase (291 aa).

A pyruvate-binding site is contributed by threonine 45. Tyrosine 131 functions as the Proton donor/acceptor in the catalytic mechanism. Lysine 159 functions as the Schiff-base intermediate with substrate in the catalytic mechanism. Isoleucine 202 contacts pyruvate.

It belongs to the DapA family. As to quaternary structure, homotetramer; dimer of dimers.

The protein resides in the cytoplasm. It carries out the reaction L-aspartate 4-semialdehyde + pyruvate = (2S,4S)-4-hydroxy-2,3,4,5-tetrahydrodipicolinate + H2O + H(+). It functions in the pathway amino-acid biosynthesis; L-lysine biosynthesis via DAP pathway; (S)-tetrahydrodipicolinate from L-aspartate: step 3/4. In terms of biological role, catalyzes the condensation of (S)-aspartate-beta-semialdehyde [(S)-ASA] and pyruvate to 4-hydroxy-tetrahydrodipicolinate (HTPA). In Methanosarcina mazei (strain ATCC BAA-159 / DSM 3647 / Goe1 / Go1 / JCM 11833 / OCM 88) (Methanosarcina frisia), this protein is 4-hydroxy-tetrahydrodipicolinate synthase.